The following is a 242-amino-acid chain: Probable transcriptional regulatory protein NMB1648 (242 aa).

It belongs to the TACO1 family.

The protein resides in the cytoplasm. This Neisseria meningitidis serogroup B (strain ATCC BAA-335 / MC58) protein is Probable transcriptional regulatory protein NMB1648.